The sequence spans 290 residues: MRLGIHTFTSGSLETAALTAGDLGAATFQIFSASPRMWRARVPDPVQIKLLCAARERFSLSPLVIHTNYLVNLASLDPVIRAKSIDAFRGELQRAIAIGAEYLVVHPGSYRGHTVEEGIAAFALGLRDASAGLPPHQLTVLLENTAGAGCHLGGKFEELRSIRDLTAELTDLPIGYCLDTCHLLAAGFDIVTAPGLRATLRAAEAVLGLANVHVFHANDSRFPRGSHVDRHAHIGEGFIGADAFRRILTHPKLRRKPFILETPVDEPGDDRRNLDILKSLAGSKLPLPAR.

Residues His66, His106, Glu143, Asp179, His182, His216, Asp229, His231, and Glu261 each contribute to the Zn(2+) site.

This sequence belongs to the AP endonuclease 2 family. Zn(2+) serves as cofactor.

The enzyme catalyses Endonucleolytic cleavage to 5'-phosphooligonucleotide end-products.. Endonuclease IV plays a role in DNA repair. It cleaves phosphodiester bonds at apurinic or apyrimidinic (AP) sites, generating a 3'-hydroxyl group and a 5'-terminal sugar phosphate. In Solibacter usitatus (strain Ellin6076), this protein is Probable endonuclease 4.